A 245-amino-acid chain; its full sequence is Eukaryotic translation initiation factor 4E type 2 (245 aa).

Positions 1-38 (MNNKFDALKDDDSGDHDQNEENSTQKDGEKEKTERDKN) are enriched in basic and acidic residues. The interval 1–52 (MNNKFDALKDDDSGDHDQNEENSTQKDGEKEKTERDKNQSSSKRKAVVPGPA) is disordered. Ser13 carries the post-translational modification Phosphoserine. The EIF4EBP1/2/3 binding stretch occupies residues 54–57 (HPLQ). 78–79 (YE) contacts mRNA. Residues 95–99 (WRFYS) are EIF4EBP1/2/3 binding. MRNA-binding positions include His110 and 124-125 (WE). Lys134 is modified (N6-acetyllysine; alternate). Lys134 is covalently cross-linked (Glycyl lysine isopeptide (Lys-Gly) (interchain with G-Cter in ISG15); alternate). The tract at residues 150 to 157 (NLILAMLG) is EIF4EBP1/2/3 binding. MRNA-binding positions include 174–179 (RFQEDI) and 222–224 (KMP). A Glycyl lysine isopeptide (Lys-Gly) (interchain with G-Cter in ISG15) cross-link involves residue Lys222.

This sequence belongs to the eukaryotic initiation factor 4E family. In terms of assembly, interacts with EIF4EBP1, EIF4EBP2 and EIF4EBP3. Does not interact with eIF4G (EIF4G1, EIF4G2 or EIF4G3). Component of the 4EHP-GYF2 complex, at least composed of EIF4E2, GIGYF2 and ZNF598. Interacts with GIGYF2 (via the 4EHP-binding motif); the interaction is direct. Interacts with EIF4ENIF1/4E-T (via YXXXXLphi motif); increasing affinity for the 7-methylguanosine-containing mRNA cap. Ubiquitinated by ARIH1. The consequences of ubiquitination are however unclear: according to a report, EIF4E2 ubiquitination leads to promote EIF4E2 cap-binding and protein translation arrest. According to another report ubiquitination leads to its subsequent degradation. In terms of processing, ISGylation enhances its cap structure-binding activity and translation-inhibition activity.

The protein resides in the cytoplasm. It is found in the P-body. Functionally, recognizes and binds the 7-methylguanosine-containing mRNA cap during an early step in the initiation. Acts as a repressor of translation initiation. In contrast to EIF4E, it is unable to bind eIF4G (EIF4G1, EIF4G2 or EIF4G3), suggesting that it acts by competing with EIF4E and block assembly of eIF4F at the cap. In P-bodies, component of a complex that promotes miRNA-mediated translational repression. Involved in virus-induced host response by mediating miRNA MIR34A-induced translational silencing which controls IFNB1 production by a negative feedback mechanism. In terms of biological role, component of the 4EHP-GYF2 complex, a multiprotein complex that acts as a repressor of translation initiation. In association with GIGYF2, assists ribosome-associated quality control (RQC) by sequestering the mRNA cap, blocking ribosome initiation and decreasing the translational load on problematic messages. Part of a pathway that works in parallel to RQC-mediated degradation of the stalled nascent polypeptide. GIGYF2 and EIF4E2 work downstream and independently of ZNF598, which seems to work as a scaffold that can recruit them to faulty mRNA even if alternative recruitment mechanisms may exist. (Microbial infection) Upon SARS coronavirus-2/SARS-CoV-2 infection, the interaction with non-structural protein 2 (nsp2) with GIGYF2 enhances GIGYF2 binding to EIF4E2 and increases repression of translation initiation of genes involved in antiviral innate immune response such as IFNB1. This Homo sapiens (Human) protein is Eukaryotic translation initiation factor 4E type 2.